The sequence spans 416 residues: N-acetylmuramoyl-L-alanine amidase AmiC (416 aa).

The first 26 residues, 1 to 26 (MIKLTRRQIIRRTAGTLFALSPIASA), serve as a signal peptide directing secretion. The tract at residues 166 to 191 (RGSPEADLAQNTTPQPGRGRNGRRPV) is disordered. In terms of domain architecture, MurNAc-LAA spans 192-405 (IMLDPGHGGE…CAQSIASGVQ (214 aa)).

Belongs to the N-acetylmuramoyl-L-alanine amidase 3 family.

It localises to the periplasm. It catalyses the reaction Hydrolyzes the link between N-acetylmuramoyl residues and L-amino acid residues in certain cell-wall glycopeptides.. Its function is as follows. Cell-wall hydrolase involved in septum cleavage during cell division. The sequence is that of N-acetylmuramoyl-L-alanine amidase AmiC (amiC) from Neisseria meningitidis serogroup B (strain ATCC BAA-335 / MC58).